Here is a 1216-residue protein sequence, read N- to C-terminus: MAAMAPGGSGSGGGVNPFLSDSDEDDDEVAATEERRAVLRLGAGSGLDPGSAGSLSPQDPVALGSSARPGLPGEASAAAVALGGTGETPARLSIDAIAAQLLRDQYLLTALELHTELLESGRELPRLRDYFSNPGNFERQSGTPPGMGAPGVPGAAGVGGAGGREPSTASGGGQLNRAGSISTLDSLDFARYSDDGNRETDEKVAVLEFELRKAKETIQALRANLTKAAEHEVPLQERKNYKSSPEIQEPIKPLEKRALNFLVNEFLLKNNYKLTSITFSDENDDQDFELWDDVGLNIPKPPDLLQLYRDFGNHQVTGKDLVDVASGVEEDELEALTPIISNLPPTLETPQPAENSMLVQKLEDKISLLNSEKWSLMEQIRRLKSEMDFLKNEHFAIPAVCDSVQPPLDQLPHKDSEDSGQHPDVNSSDKGKNTDIHLSISDEADSTIPKENSPNSFPRREREGMPPSSLSSKKTVHFDKPNRKLSPAFHQALLSFCRMSADSRLGYEVSRIADSEKSVMLMLGRCLPHIVPNVLLAKREELIPLILCTACLHPEPKERDQLLHILFNLIKRPDDEQRQMILTGCVAFARHVGPTRVEAELLPQCWEQINHKYPERRLLVAESCGALAPYLPKEIRSSLVLSMLQQMLMEDKADLVREAVIKSLGIIMGYIDDPDKYHQGFELLLSALGDPSERVVSATHQVFLPAYAAWTTELGNLQSHLILTLLNKIEKLLREGEHGLDEHKLHMYLSALQSLIPSLFALVLQNAPFSSKAKLHGEVPQIEVTRFPRPMSPLQDVSTIIGSREQLAVLLQLYDYQLEQEGTTGWESLLWVVNQLLPQLIEIVGKINVTSTACVHEFSRFFWRLCRTFGKIFTNTKVKPQFQEILRLSEENIDSSAGNGVLTKATVPIYATGVLTCYIQEEDRKLLVGFLEDVMTLLSLSHAPLDSLKASFVELGANPAYHELLLTVLWYGVVHTSALVRCTAARMFELTLRGMSEALVDKRVAPALVTLSSDPEFSVRIATIPAFGTIMETVIQRELLERVKMQLASFLEDPQYQDQHSLHTEIIKTFGRVGPNAEPRFRDEFVIPHLHKLALVNNLQIVDSKRLDIATHLFEAYSALSCCFISEDLMVNHFLPGLRCLRTDMEHLSPEHEVILSSMIKECEQKVENKTVQEPQGSMSIAASLVSEDTKTKFLNKMGQLTTSGAMLANVFQRKK.

Disordered stretches follow at residues 1–73 and 135–177; these read MAAM…GLPG and GNFE…QLNR. Alanine 2 is subject to N-acetylalanine. Serine 20 and serine 22 each carry phosphoserine. The segment covering 21–31 has biased composition (acidic residues); that stretch reads DSDEDDDEVAA. Position 32 is a phosphothreonine (threonine 32). Phosphoserine occurs at positions 54 and 56. Residues 148–163 show a composition bias toward gly residues; the sequence is GAPGVPGAAGVGGAGG. Phosphoserine occurs at positions 180 and 182. Threonine 183 carries the phosphothreonine modification. Serine 186 carries the post-translational modification Phosphoserine. Residues 197–231 are a coiled coil; sequence NRETDEKVAVLEFELRKAKETIQALRANLTKAAEH. The region spanning 255 to 287 is the LisH domain; that stretch reads EKRALNFLVNEFLLKNNYKLTSITFSDENDDQD. Residues 359–397 adopt a coiled-coil conformation; the sequence is VQKLEDKISLLNSEKWSLMEQIRRLKSEMDFLKNEHFAI. Serine 385 is modified (phosphoserine). Positions 401–477 are disordered; sequence CDSVQPPLDQ…SSLSSKKTVH (77 aa). Over residues 411 to 435 the composition is skewed to basic and acidic residues; it reads LPHKDSEDSGQHPDVNSSDKGKNTD. Serine 453 is modified (phosphoserine). Residues 497–779 are interaction with RAB11A and RAB11B; sequence CRMSADSRLG…SSKAKLHGEV (283 aa). 2 HEAT repeats span residues 601-639 and 640-679; these read LLPQ…RSSL and VLSM…KYHQ. A Phosphoserine modification is found at serine 792. One copy of the HEAT 3 repeat lies at 1004–1042; sequence VAPALVTLSSDPEFSVRIATIPAFGTIMETVIQRELLER. Serine 1149 carries the post-translational modification Phosphoserine.

It is found in the recycling endosome. Its subcellular location is the golgi apparatus. The protein resides in the trans-Golgi network. Regulates intracellular cholesterol distribution from recycling endosomes to the trans-Golgi network through interactions with RAB11 and OSBP. Functions in membrane tethering and promotes OSBP-mediated cholesterol transfer between RAB11-bound recycling endosomes and OSBP-bound Golgi-like membranes. The protein is RAB11-binding protein RELCH of Homo sapiens (Human).